The sequence spans 151 residues: 3-hydroxyacyl-[acyl-carrier-protein] dehydratase FabZ (151 aa).

H54 is an active-site residue.

The protein belongs to the thioester dehydratase family. FabZ subfamily.

The protein localises to the cytoplasm. It catalyses the reaction a (3R)-hydroxyacyl-[ACP] = a (2E)-enoyl-[ACP] + H2O. Its function is as follows. Involved in unsaturated fatty acids biosynthesis. Catalyzes the dehydration of short chain beta-hydroxyacyl-ACPs and long chain saturated and unsaturated beta-hydroxyacyl-ACPs. This is 3-hydroxyacyl-[acyl-carrier-protein] dehydratase FabZ from Buchnera aphidicola subsp. Acyrthosiphon pisum (strain 5A).